The sequence spans 100 residues: Protein RnfH (100 aa).

It belongs to the UPF0125 (RnfH) family.

The sequence is that of Protein RnfH from Pseudomonas paraeruginosa (strain DSM 24068 / PA7) (Pseudomonas aeruginosa (strain PA7)).